The following is a 724-amino-acid chain: Semaphorin-2A (724 aa).

Residues 1 to 25 (MSLLQLSPLLALLLLLCSSVSETAA) form the signal peptide. A Sema domain is found at 45–522 (QGNNNYGKHG…TDHRIKQIDL (478 aa)). A glycan (N-linked (GlcNAc...) asparagine) is linked at Asn-95. Cys-118 and Cys-129 are disulfide-bonded. Asn-163, Asn-190, Asn-229, and Asn-314 each carry an N-linked (GlcNAc...) asparagine glycan. Disulfide bonds link Cys-291–Cys-399 and Cys-315–Cys-358. N-linked (GlcNAc...) asparagine glycosylation is present at Asn-401. 2 cysteine pairs are disulfide-bonded: Cys-525-Cys-541 and Cys-535-Cys-550. The Ig-like C2-type domain maps to 552-663 (PYELDLLQDV…LCSYNITVDA (112 aa)). N-linked (GlcNAc...) asparagine glycosylation is present at Asn-563. Cys-590 and Cys-647 are disulfide-bonded. 3 N-linked (GlcNAc...) asparagine glycosylation sites follow: Asn-658, Asn-670, and Asn-708.

This sequence belongs to the semaphorin family. Interacts with PlexB. In terms of tissue distribution, transiently expressed by a single large muscle during motoneuron outgrowth and synapse formation.

It is found in the secreted. Ligand for transmembrane receptor PlexB. Plays a role in growth cone guidance. Required for both proper adult behavior and survival. Can function as a selective target-derived signal that inhibits the formation of specific synaptic terminal arbors. Function in neurons is essential for adult survival, motor neuron survival, and is important for climbing behavior and activity. During embryogenesis, plays an important role in correct salivary gland positioning. This chain is Semaphorin-2A, found in Drosophila melanogaster (Fruit fly).